A 390-amino-acid polypeptide reads, in one-letter code: Probable purine permease 7 (390 aa).

10 helical membrane-spanning segments follow: residues 42-62, 74-94, 110-130, 131-151, 169-189, 205-225, 244-264, 286-306, 312-332, and 341-361; these read WLRV…ATIL, TYVV…FRFF, SPSF…VSAY, AYLS…LILA, FTPL…LLVV, VIGF…LSLI, LAIY…FASG, TLAS…GLIF, FSNS…VIVF, and IFSI…HYLD.

It belongs to the purine permeases (TC 2.A.7.14) family.

Its subcellular location is the membrane. This is Probable purine permease 7 (PUP7) from Arabidopsis thaliana (Mouse-ear cress).